The primary structure comprises 87 residues: MSEKHFILPSSMLMIVSAVFGGIGIITTIVFVILTVLHSKSAVCKPAGKEDMKKLNGIEGMQTIKEECGGSTETSSSKPKKKAKKEV.

A helical membrane pass occupies residues 13-33 (LMIVSAVFGGIGIITTIVFVI). The tract at residues 66-87 (EECGGSTETSSSKPKKKAKKEV) is disordered. Basic residues predominate over residues 78-87 (KPKKKAKKEV).

It localises to the membrane. This is an uncharacterized protein from Caenorhabditis elegans.